The following is a 430-amino-acid chain: Putative FBD-associated F-box protein At5g56440 (430 aa).

Positions 1–49 constitute an F-box domain; that stretch reads MDRISLLPDDVVFKILSFVPTKVVVSTNLLSKRWRYLWKHVPKLDYRDP. The FBD domain maps to 349–399; it reads QWEQPSSVPKCLISSLETVEWIDYKGREVEKKVVMYLLENSRQLKTMAIRS.

The chain is Putative FBD-associated F-box protein At5g56440 from Arabidopsis thaliana (Mouse-ear cress).